The chain runs to 565 residues: MKSPTPSRPQKMALIPACIFLCFAALSVQAEETSVTPQPPDILLGPLFNDVQNAKLFPDQKTFADAVPNSDPLMILADYRMQQNQSGFDLRHFVNVNFTLPKEGEKYVPPEGQSLREHIDGLWPVLTRSTENTEKWDSLLPLPEPYVVPGGRFREVYYWDSYFTMLGLAESGHWDKVADMVANFAHEIDTYGHIPNGNRSYYLSRSQPPFFALMVELLAQHEGDAALKQYLPQMQKEYAYWMDGVENLQAGQQEKRVVKLQDGTLLNRYWDDRDTPRPESWVEDIATAKSNPNRPATEIYRDLRSAAASGWDFSSRWMDNPQQLNTLRTTSIVPVDLNSLMFKMEKILARASKAAGDNAMANQYETLANARQKGIEKYLWNDQQGWYADYDLKSHKVRNQLTAAALFPLYVNAAAKDRASKMATATKTHLLQPGGLNTTSVKSGQQWDAPNGWAPLQWVATEGLQNYGQKEVAMDISWHFLTNVQHTYDREKKLVEKYDVSATGTGGGGGEYPLQDGFGWTNGVTLKMLDLICPKEQPCDNVPATRPLSESTTQPLKQKEAEPTP.

The N-terminal stretch at 1–30 is a signal peptide; it reads MKSPTPSRPQKMALIPACIFLCFAALSVQA. Residues arginine 152, 159 to 160, asparagine 196, 205 to 207, 277 to 279, and glycine 310 each bind substrate; these read WD, RSQ, and RPE. Residues aspartate 312 and glutamate 496 each act as proton donor/acceptor in the active site. Glutamate 511 serves as a coordination point for substrate. The interval 539 to 565 is disordered; it reads CDNVPATRPLSESTTQPLKQKEAEPTP.

This sequence belongs to the glycosyl hydrolase 37 family. Monomer.

It is found in the periplasm. The enzyme catalyses alpha,alpha-trehalose + H2O = alpha-D-glucose + beta-D-glucose. Provides the cells with the ability to utilize trehalose at high osmolarity by splitting it into glucose molecules that can subsequently be taken up by the phosphotransferase-mediated uptake system. The chain is Periplasmic trehalase from Escherichia coli O7:K1 (strain IAI39 / ExPEC).